A 197-amino-acid chain; its full sequence is Isochorismatase domain-containing protein 2 (197 aa).

The protein belongs to the isochorismatase family.

The protein is Isochorismatase domain-containing protein 2 (isoc2) of Danio rerio (Zebrafish).